We begin with the raw amino-acid sequence, 63 residues long: uncharacterized protein (63 aa).

This is an uncharacterized protein from Enterobacteria phage T4 (Bacteriophage T4).